A 538-amino-acid chain; its full sequence is Probable folate-biopterin transporter 9, chloroplastic (538 aa).

Residues 1 to 57 (MNNPLLSISNPVKFFKPPIPYRISLNTTINKKQKHQSKTLVVKSNKRSTTSLTSSVS) constitute a chloroplast transit peptide. 12 helical membrane passes run 85–105 (VLLCALGYWVQGLRCFSWLAL), 129–149 (LPMVAKPLYGVLSDVLYIGGA), 152–172 (VPYISVGVLLQGLAWGSLAIF), 178–198 (VLPSLMAFILLSNLGASITEV), 220–240 (ALMASAVGGILGNLLGGYCLL), 246–266 (ILFLAFTALLSLQLIVSLSSK), 309–329 (LIWIVSSIALVPLLSGSVFCY), 339–359 (SVIGMSKVIGQLMLLCLTVVY), 370–390 (ALIHIVQLLYAFSLLFDYILV), 395–415 (LAFGISNTAFVLCFSSVAEIL), 447–467 (LCLSSVVSGFTGVGMANMIGI), and 479–499 (ILIQSLAALVPLWFIHYVPML).

It belongs to the major facilitator superfamily. Folate-biopterin transporter (TC 2.A.71) family.

Its subcellular location is the plastid. It is found in the chloroplast membrane. Functionally, could mediate folate transport. The chain is Probable folate-biopterin transporter 9, chloroplastic from Arabidopsis thaliana (Mouse-ear cress).